A 422-amino-acid polypeptide reads, in one-letter code: Elongation factor 1-gamma (422 aa).

The region spanning 1–82 is the GST N-terminal domain; the sequence is MALVLHAGKT…YVARLKADNP (82 aa). One can recognise a GST C-terminal domain in the interval 87-215; sequence SLIDYAHIEQ…VKQTESVPPV (129 aa). Positions 210-269 are disordered; that stretch reads ESVPPVPSAKKPSQPKETKSKAKEEPKKEAKKEPAKPKAEAAEEVEEAPKPKPKNPLDLL. The segment covering 223-250 has biased composition (basic and acidic residues); the sequence is QPKETKSKAKEEPKKEAKKEPAKPKAEA. In terms of domain architecture, EF-1-gamma C-terminal spans 262–422; the sequence is PKNPLDLLPP…EALLDAKCFK (161 aa).

As to quaternary structure, EF-1 is composed of four subunits: alpha, beta, delta, and gamma.

Its function is as follows. Probably plays a role in anchoring the complex to other cellular components. The protein is Elongation factor 1-gamma of Prunus avium (Cherry).